We begin with the raw amino-acid sequence, 582 residues long: V-type ATP synthase alpha chain (582 aa).

231 to 238 contributes to the ATP binding site; sequence GPFGSGKT.

The protein belongs to the ATPase alpha/beta chains family.

The catalysed reaction is ATP + H2O + 4 H(+)(in) = ADP + phosphate + 5 H(+)(out). Functionally, produces ATP from ADP in the presence of a proton gradient across the membrane. The V-type alpha chain is a catalytic subunit. The protein is V-type ATP synthase alpha chain of Deinococcus geothermalis (strain DSM 11300 / CIP 105573 / AG-3a).